A 304-amino-acid polypeptide reads, in one-letter code: Undecaprenyl-diphosphatase (304 aa).

The next 8 helical transmembrane spans lie at 5-25 (FLFI…EFVP), 47-67 (GFPE…VVVL), 72-92 (ISSS…LKAS), 111-131 (FGIN…LFHD), 137-157 (LFST…LIVI), 209-231 (ISGL…AMVG), 248-268 (TNLI…LVVI), and 282-302 (IFAI…FTKV).

The protein belongs to the UppP family.

It localises to the cell membrane. It catalyses the reaction di-trans,octa-cis-undecaprenyl diphosphate + H2O = di-trans,octa-cis-undecaprenyl phosphate + phosphate + H(+). Its function is as follows. Catalyzes the dephosphorylation of undecaprenyl diphosphate (UPP). Confers resistance to bacitracin. This Clostridium perfringens (strain SM101 / Type A) protein is Undecaprenyl-diphosphatase.